We begin with the raw amino-acid sequence, 284 residues long: SF-assemblin (284 aa).

The tract at residues 1-30 (PTPSPEARVASRPFLDSPLPGSPRSGSPTG) is disordered. A nonhelical region region spans residues 1-38 (PTPSPEARVASRPFLDSPLPGSPRSGSPTGYITATKAI). A compositionally biased stretch (low complexity) spans 17–30 (SPLPGSPRSGSPTG). The rod stretch occupies residues 39–284 (SAGKLEHVAE…QDGLRIVNNS (246 aa)). Coiled coils occupy residues 56 to 102 (EIEL…QIQV) and 239 to 268 (LDEI…QAVN).

This sequence belongs to the SF-assemblin family. Consists of at least four isoforms including two phosphorylated.

The protein localises to the cytoplasm. It is found in the cytoskeleton. In terms of biological role, major component of the striated microtubule-associated fibers (SMAFs; system-I-fibers). The protein is SF-assemblin of Spermatozopsis similis (Green alga).